The primary structure comprises 342 residues: Galactose mutarotase (342 aa).

Position 14 is a phosphoserine (S14). Beta-D-galactose contacts are provided by residues 81–82 and H107; that span reads NR. S124 is modified (phosphoserine). Catalysis depends on H176, which acts as the Proton donor. Beta-D-galactose-binding positions include 176 to 178, D243, Q279, and E307; that span reads HSY. Residue E307 is the Proton acceptor of the active site.

Belongs to the aldose epimerase family. In terms of assembly, monomer.

It localises to the cytoplasm. The enzyme catalyses alpha-D-galactose = beta-D-galactose. The catalysed reaction is alpha-D-glucose = beta-D-glucose. Its pathway is carbohydrate metabolism; hexose metabolism. The protein operates within carbohydrate metabolism; galactose metabolism. In terms of biological role, mutarotase that catalyzes the interconversion of beta-D-galactose and alpha-D-galactose during galactose metabolism. Beta-D-galactose is metabolized in the liver into glucose 1-phosphate, the primary metabolic fuel, by the action of four enzymes that constitute the Leloir pathway: GALM, GALK1 (galactokinase), GALT (galactose-1-phosphate uridylyltransferase) and GALE (UDP-galactose-4'-epimerase). Involved in the maintenance of the equilibrium between the beta- and alpha-anomers of galactose, therefore ensuring a sufficient supply of the alpha-anomer for GALK1. Also active on D-glucose although shows a preference for galactose over glucose. This chain is Galactose mutarotase (GALM), found in Sus scrofa (Pig).